The chain runs to 312 residues: Beta-ketoacyl-[acyl-carrier-protein] synthase III (312 aa).

Catalysis depends on residues Cys-112 and His-237. The interval 238-242 is ACP-binding; that stretch reads QANIR. The active site involves Asn-267.

It belongs to the thiolase-like superfamily. FabH family. Homodimer.

The protein localises to the cytoplasm. The catalysed reaction is malonyl-[ACP] + acetyl-CoA + H(+) = 3-oxobutanoyl-[ACP] + CO2 + CoA. It participates in lipid metabolism; fatty acid biosynthesis. Functionally, catalyzes the condensation reaction of fatty acid synthesis by the addition to an acyl acceptor of two carbons from malonyl-ACP. Catalyzes the first condensation reaction which initiates fatty acid synthesis and may therefore play a role in governing the total rate of fatty acid production. Possesses both acetoacetyl-ACP synthase and acetyl transacylase activities. Its substrate specificity determines the biosynthesis of branched-chain and/or straight-chain of fatty acids. The protein is Beta-ketoacyl-[acyl-carrier-protein] synthase III of Bacillus pumilus (strain SAFR-032).